The following is a 179-amino-acid chain: MAVSRITRWRLMSMFFGIKCLFLIVALGVLVKNSFTIQNIQSTPSSTPIVEFQKVSKCCACLEKWIGHQCSCYFISKEEKSWKGSREFCASQNSSLLQLQTRNELSFMSSSQAFFWIGIHYNEERSAWLWEDGTFPSKDLFPEFSKFRQDHCIGYSISREISSESCENKNRFICKQLPT.

Residues 1–10 (MAVSRITRWR) are Cytoplasmic-facing. A helical; Signal-anchor for type II membrane protein membrane pass occupies residues 11–31 (LMSMFFGIKCLFLIVALGVLV). The Extracellular portion of the chain corresponds to 32–179 (KNSFTIQNIQ…NRFICKQLPT (148 aa)). Cystine bridges form between C58/C70, C61/C72, C89/C174, and C152/C166. Residues 68–175 (HQCSCYFISK…CENKNRFICK (108 aa)) enclose the C-type lectin domain. The N-linked (GlcNAc...) asparagine glycan is linked to N93.

As to quaternary structure, can form disulfide-bonded heterodimer with NKG2 family members KLRC1 and KLRC2. KLRD1-KLRC1 heterodimer interacts with peptide-bound MHC-E-B2M heterotrimeric complex. KLRD1 plays a prominent role in directly interacting with MHC-E. KLRD1-KLRC1 interacts with much higher affinity with peptide-bound MHC-E-B2M than KLRD1-KLRC2. Interacts with the adapter protein TYROBP/DAP12; this interaction is required for cell surface expression and cell activation.

It localises to the cell membrane. Immune receptor involved in self-nonself discrimination. In complex with KLRC1 or KLRC2 on cytotoxic and regulatory lymphocyte subsets, recognizes non-classical major histocompatibility (MHC) class Ib molecule MHC-E loaded with self-peptides derived from the signal sequence of classical MHC class Ia and non-classical MHC class Ib molecules. Enables cytotoxic cells to monitor the expression of MHC class I molecules in healthy cells and to tolerate self. Primarily functions as a ligand binding subunit as it lacks the capacity to signal. In terms of biological role, KLRD1-KLRC1 acts as an immune inhibitory receptor. Key inhibitory receptor on natural killer (NK) cells that regulates their activation and effector functions. Dominantly counteracts T cell receptor signaling on a subset of memory/effector CD8-positive T cells as part of an antigen-driven response to avoid autoimmunity. On intraepithelial CD8-positive gamma-delta regulatory T cells triggers TGFB1 secretion, which in turn limits the cytotoxic programming of intraepithelial CD8-positive alpha-beta T cells, distinguishing harmless from pathogenic antigens. In MHC-E-rich tumor microenvironment, acts as an immune inhibitory checkpoint and may contribute to progressive loss of effector functions of NK cells and tumor-specific T cells, a state known as cell exhaustion. Upon MHC-E-peptide binding, transmits intracellular signals through KLRC1 immunoreceptor tyrosine-based inhibition motifs (ITIMs) by recruiting INPP5D/SHIP-1 and INPPL1/SHIP-2 tyrosine phosphatases to ITIMs, and ultimately opposing signals transmitted by activating receptors through dephosphorylation of proximal signaling molecules. Its function is as follows. KLRD1-KLRC2 acts as an immune activating receptor. On cytotoxic lymphocyte subsets recognizes MHC-E loaded with signal sequence-derived peptides from non-classical MHC class Ib MHC-G molecules, likely playing a role in the generation and effector functions of adaptive NK cells and in maternal-fetal tolerance during pregnancy. Regulates the effector functions of terminally differentiated cytotoxic lymphocyte subsets, and in particular may play a role in adaptive NK cell response to viral infection. Upon MHC-E-peptide binding, transmits intracellular signals via the adapter protein TYROBP/DAP12, triggering the phosphorylation of proximal signaling molecules and cell activation. This chain is Natural killer cells antigen CD94 (Klrd1), found in Rattus norvegicus (Rat).